Here is a 122-residue protein sequence, read N- to C-terminus: Large ribosomal subunit protein uL14 (122 aa).

The protein belongs to the universal ribosomal protein uL14 family. As to quaternary structure, part of the 50S ribosomal subunit. Forms a cluster with proteins L3 and L19. In the 70S ribosome, L14 and L19 interact and together make contacts with the 16S rRNA in bridges B5 and B8.

In terms of biological role, binds to 23S rRNA. Forms part of two intersubunit bridges in the 70S ribosome. This Bifidobacterium animalis subsp. lactis (strain AD011) protein is Large ribosomal subunit protein uL14.